The primary structure comprises 509 residues: MAAIGVHLGCTSACVAVYKDGRADVVANDAGDRVTPAVVAYSEREQVVGLAAKQSRIRNISSTVVKVKQILGRSTADPQAQKYISESKCLVIEKNGKLQYEIDTGEETKLVSPEDVARLIFSKMKETAHSVLGSDANDVVVTVPFDFGEKQKSALGEAAGAAGFNVLRLIHEPSAALLAYGIGQDCPTGKSNVLVFKLGGTSLSLSIMEVNSGMYRVLSTNTSDNIGGVHFTDSLAQYLASEFQRLFKHDVRGSARAMMKLMNSAEVAKHSLSTLGSANCFVDSLYEGQDFDCNVSRARFELLCSPLFNKCIEAVRALLQQSGFTADDINKVVLCGGSSRIPRLQQLIKDLFPAGDLLNSIPPDEVIPIGAAIEAGILVGKESTSGDDSVLIECSARDILVKGVDESGANRFTVLFPSGTPLPARRQHTLQAPGSISSVCLELYESEGKNSVKEETKFAQVVLQDLDKKENGLRDILAVLTMKRDGSLQVTCTDQETGKCEAITVEVAS.

It belongs to the heat shock protein 70 family. In terms of assembly, component of ribosome-associated complex (RAC), a heterodimer composed of Hsp70/DnaK-type chaperone HSPA14 and Hsp40/DnaJ-type chaperone DNAJC2.

The protein localises to the cytoplasm. It is found in the cytosol. Its function is as follows. Component of the ribosome-associated complex (RAC), a complex involved in folding or maintaining nascent polypeptides in a folding-competent state. In the RAC complex, binds to the nascent polypeptide chain, while DNAJC2 stimulates its ATPase activity. The sequence is that of Heat shock 70 kDa protein 14 (Hspa14) from Rattus norvegicus (Rat).